Consider the following 174-residue polypeptide: Adenylate kinase (174 aa).

Positions 12–41 are NMP; the sequence is STGDMLRAAIKAGTPLGLEAKKIIDEGGLV. Residues threonine 13, arginine 18, 39–41, 67–70, and glutamine 74 contribute to the AMP site; these read GLV and GFPR. The tract at residues 104-141 is LID; sequence GRRVHLASGRTYHVTYNPPKVEGKDDVTGEDLIQRDDD. ATP is bound by residues arginine 105 and 114 to 115; that span reads TY. Positions 138 and 149 each coordinate AMP.

It belongs to the adenylate kinase family. As to quaternary structure, monomer.

It localises to the cytoplasm. It carries out the reaction AMP + ATP = 2 ADP. Its pathway is purine metabolism; AMP biosynthesis via salvage pathway; AMP from ADP: step 1/1. Catalyzes the reversible transfer of the terminal phosphate group between ATP and AMP. Plays an important role in cellular energy homeostasis and in adenine nucleotide metabolism. The chain is Adenylate kinase from Neisseria cinerea.